Reading from the N-terminus, the 369-residue chain is MNASQRVRVAVVFGGRSNEHAISCVSAGSILRNLDPRRFEVVAIGITPQGSWVLTDGDPAALAISDRQLPEVTSASGTELALPADPGRSGQLVSLPPGASEVLASVDVVFPVLHGPYGEDGTIQGLLELAGVPYVGAGVFASAAGMDKEFTKKLFAAEGLPIGDYAVLRPSQSTLSLQDRERLGLPVFVKPARGGSSIGVSRVSSWDELDAAVAAARDHDPKVIVEAAIAGRELECGVLEMPDGTVQASTVGEIRVAGVRGREDSFYDFATKYLDDTAELDVPAKVDDEIADAVRELAIRAFKAVDCQGLARVDFFLTETGPVLNEINTMPGFTTISMYPRMWAASGVDYPSLLATMVETALARGVGLR.

An ATP-grasp domain is found at 152-359 (KKLFAAEGLP…YPSLLATMVE (208 aa)). Residue 180-235 (RERLGLPVFVKPARGGSSIGVSRVSSWDELDAAVAAARDHDPKVIVEAAIAGRELE) participates in ATP binding. Residues Asp314, Glu326, and Asn328 each contribute to the Mg(2+) site.

The protein belongs to the D-alanine--D-alanine ligase family. Mg(2+) is required as a cofactor. It depends on Mn(2+) as a cofactor.

Its subcellular location is the cytoplasm. The catalysed reaction is 2 D-alanine + ATP = D-alanyl-D-alanine + ADP + phosphate + H(+). Its pathway is cell wall biogenesis; peptidoglycan biosynthesis. Its function is as follows. Cell wall formation. The sequence is that of D-alanine--D-alanine ligase from Mycolicibacterium paratuberculosis (strain ATCC BAA-968 / K-10) (Mycobacterium paratuberculosis).